The following is a 591-amino-acid chain: Aspartate--tRNA(Asp/Asn) ligase (591 aa).

Glu174 serves as a coordination point for L-aspartate. Positions 198–201 are aspartate; the sequence is QLFK. Arg220 contacts L-aspartate. ATP contacts are provided by residues 220–222 and Gln229; that span reads RDE. His450 contributes to the L-aspartate binding site. Glu483 is an ATP binding site. Residue Arg490 coordinates L-aspartate. An ATP-binding site is contributed by 535–538; sequence GLDR.

The protein belongs to the class-II aminoacyl-tRNA synthetase family. Type 1 subfamily. Homodimer.

It is found in the cytoplasm. The catalysed reaction is tRNA(Asx) + L-aspartate + ATP = L-aspartyl-tRNA(Asx) + AMP + diphosphate. Its function is as follows. Aspartyl-tRNA synthetase with relaxed tRNA specificity since it is able to aspartylate not only its cognate tRNA(Asp) but also tRNA(Asn). Reaction proceeds in two steps: L-aspartate is first activated by ATP to form Asp-AMP and then transferred to the acceptor end of tRNA(Asp/Asn). This chain is Aspartate--tRNA(Asp/Asn) ligase, found in Ectopseudomonas mendocina (strain ymp) (Pseudomonas mendocina).